We begin with the raw amino-acid sequence, 246 residues long: MGERGVEDKSAVQESATELEAGIGYRFVNRQFLAEALTHRSWVNERRGEEGIRDNERLEFLGDAVLGLLVGKMLFARFPQSREGVLARMKASLVGEETLAALASARGLGRHLLLGRGEERSGGRERRSLLANTYEALLAAVYLDGGLGPVERIVEQDFSPLLAGIASGATGRDFKTEFQEMVQTRFGTAPTYELIATDGPPHDRRFTVIAMVAGKRMGEGAGRSKKEAEQAAARQVLARFAAEGEG.

In terms of domain architecture, RNase III spans 16–146; sequence ATELEAGIGY…LLAAVYLDGG (131 aa). E59 contributes to the Mg(2+) binding site. D63 is a catalytic residue. Residues N132 and E135 each coordinate Mg(2+). E135 is an active-site residue. The DRBM domain occupies 173–242; it reads DFKTEFQEMV…ARQVLARFAA (70 aa).

The protein belongs to the ribonuclease III family. In terms of assembly, homodimer. Requires Mg(2+) as cofactor.

It localises to the cytoplasm. It carries out the reaction Endonucleolytic cleavage to 5'-phosphomonoester.. Functionally, digests double-stranded RNA. Involved in the processing of primary rRNA transcript to yield the immediate precursors to the large and small rRNAs (23S and 16S). Processes some mRNAs, and tRNAs when they are encoded in the rRNA operon. Processes pre-crRNA and tracrRNA of type II CRISPR loci if present in the organism. The polypeptide is Ribonuclease 3 (Geobacter metallireducens (strain ATCC 53774 / DSM 7210 / GS-15)).